The following is a 138-amino-acid chain: uncharacterized protein (138 aa).

This is an uncharacterized protein from Saccharomyces cerevisiae (strain ATCC 204508 / S288c) (Baker's yeast).